The sequence spans 797 residues: Trafficking protein particle complex subunit 12 (797 aa).

Disordered stretches follow at residues Met-1–Ser-257 and Ser-286–Ser-338. Over residues Gln-9–Glu-23 the composition is skewed to low complexity. Positions Met-29–Thr-43 are enriched in basic and acidic residues. Acidic residues predominate over residues Gly-47–Pro-58. 2 stretches are compositionally biased toward basic and acidic residues: residues Phe-66 to Met-75 and Ala-107 to Val-121. Residues Ser-125 and Ser-128 each carry the phosphoserine modification. A Phosphothreonine modification is found at Thr-130. Basic and acidic residues predominate over residues Val-173 to Gln-185. A compositionally biased stretch (polar residues) spans Ile-206 to Gln-216. Over residues Ser-232–Lys-244 the composition is skewed to low complexity. A phosphoserine mark is found at Ser-234, Ser-309, and Ser-314. TPR repeat units lie at residues Gly-607–Gln-640, Pro-642–Leu-675, Ile-682–Asn-715, and Ala-716–His-749.

Component of the multisubunit TRAPP (transport protein particle) complex, which includes at least TRAPPC2, TRAPPC2L, TRAPPC3, TRAPPC3L, TRAPPC4, TRAPPC5, TRAPPC8, TRAPPC9, TRAPPC10, TRAPPC11 and TRAPPC12. Interacts with CENPE. In terms of processing, phosphorylated as the cells enter mitosis but is dephosphorylated at or before the onset of anaphase. The phosphorylated form recruits CENPE to kinetochores more efficiently than the non-phosphorylated form.

Its subcellular location is the endoplasmic reticulum-Golgi intermediate compartment. It localises to the nucleus. In terms of biological role, component of the TRAPP complex, which is involved in endoplasmic reticulum to Golgi apparatus trafficking at a very early stage. Also plays a role in chromosome congression, kinetochore assembly and stability and controls the recruitment of CENPE to the kinetochores. The polypeptide is Trafficking protein particle complex subunit 12 (Mus musculus (Mouse)).